Reading from the N-terminus, the 343-residue chain is N-acetyl-gamma-glutamyl-phosphate reductase (343 aa).

The active site involves Cys-148.

This sequence belongs to the NAGSA dehydrogenase family. Type 1 subfamily.

The protein localises to the cytoplasm. The catalysed reaction is N-acetyl-L-glutamate 5-semialdehyde + phosphate + NADP(+) = N-acetyl-L-glutamyl 5-phosphate + NADPH + H(+). It participates in amino-acid biosynthesis; L-arginine biosynthesis; N(2)-acetyl-L-ornithine from L-glutamate: step 3/4. Functionally, catalyzes the NADPH-dependent reduction of N-acetyl-5-glutamyl phosphate to yield N-acetyl-L-glutamate 5-semialdehyde. This Caldicellulosiruptor bescii (strain ATCC BAA-1888 / DSM 6725 / KCTC 15123 / Z-1320) (Anaerocellum thermophilum) protein is N-acetyl-gamma-glutamyl-phosphate reductase.